Consider the following 239-residue polypeptide: tRNA (guanine-N(7)-)-methyltransferase (239 aa).

Positions 69, 94, 121, and 144 each coordinate S-adenosyl-L-methionine. The active site involves aspartate 144. Substrate is bound at residue lysine 148. Positions 150–155 are interaction with RNA; sequence RHNKRR. Residues aspartate 180 and 217 to 220 each bind substrate; that span reads TKFE.

This sequence belongs to the class I-like SAM-binding methyltransferase superfamily. TrmB family. As to quaternary structure, monomer.

The enzyme catalyses guanosine(46) in tRNA + S-adenosyl-L-methionine = N(7)-methylguanosine(46) in tRNA + S-adenosyl-L-homocysteine. The protein operates within tRNA modification; N(7)-methylguanine-tRNA biosynthesis. Catalyzes the formation of N(7)-methylguanine at position 46 (m7G46) in tRNA. This Serratia proteamaculans (strain 568) protein is tRNA (guanine-N(7)-)-methyltransferase.